The primary structure comprises 270 residues: Probable septum site-determining protein MinC (270 aa).

This sequence belongs to the MinC family. As to quaternary structure, interacts with MinD and FtsZ.

Cell division inhibitor that blocks the formation of polar Z ring septums. Rapidly oscillates between the poles of the cell to destabilize FtsZ filaments that have formed before they mature into polar Z rings. Prevents FtsZ polymerization. The polypeptide is Probable septum site-determining protein MinC (Cupriavidus necator (strain ATCC 17699 / DSM 428 / KCTC 22496 / NCIMB 10442 / H16 / Stanier 337) (Ralstonia eutropha)).